The chain runs to 490 residues: Betaine aldehyde dehydrogenase (490 aa).

K(+)-binding residues include threonine 26, isoleucine 27, and aspartate 93. 150 to 152 (GAW) contacts NAD(+). The active-site Charge relay system is the lysine 162. Residue 176-179 (KPSE) coordinates NAD(+). K(+) is bound at residue valine 180. 230-233 (GVAS) provides a ligand contact to NAD(+). Position 246 (leucine 246) interacts with K(+). Glutamate 252 functions as the Proton acceptor in the catalytic mechanism. Glycine 254, cysteine 286, and glutamate 387 together coordinate NAD(+). Residue cysteine 286 is the Nucleophile of the active site. Cysteine 286 bears the Cysteine sulfenic acid (-SOH) mark. K(+) contacts are provided by lysine 457 and glycine 460. Glutamate 464 functions as the Charge relay system in the catalytic mechanism.

Belongs to the aldehyde dehydrogenase family. In terms of assembly, dimer of dimers. K(+) serves as cofactor.

It carries out the reaction betaine aldehyde + NAD(+) + H2O = glycine betaine + NADH + 2 H(+). Its pathway is amine and polyamine biosynthesis; betaine biosynthesis via choline pathway; betaine from betaine aldehyde: step 1/1. Involved in the biosynthesis of the osmoprotectant glycine betaine. Catalyzes the irreversible oxidation of betaine aldehyde to the corresponding acid. The sequence is that of Betaine aldehyde dehydrogenase from Escherichia coli O45:K1 (strain S88 / ExPEC).